We begin with the raw amino-acid sequence, 642 residues long: Threonine--tRNA ligase (642 aa).

Residues 1 to 65 (MSDIITVTLP…DEDVKLQIFT (65 aa)) enclose the TGS domain. Positions 248–541 (DHRKLGKELD…LIEHFAGAFP (294 aa)) are catalytic. Zn(2+) is bound by residues C342, H393, and H518.

It belongs to the class-II aminoacyl-tRNA synthetase family. Homodimer. Requires Zn(2+) as cofactor.

The protein localises to the cytoplasm. It catalyses the reaction tRNA(Thr) + L-threonine + ATP = L-threonyl-tRNA(Thr) + AMP + diphosphate + H(+). In terms of biological role, catalyzes the attachment of threonine to tRNA(Thr) in a two-step reaction: L-threonine is first activated by ATP to form Thr-AMP and then transferred to the acceptor end of tRNA(Thr). Also edits incorrectly charged L-seryl-tRNA(Thr). The polypeptide is Threonine--tRNA ligase (Myxococcus xanthus (strain DK1622)).